The following is an 888-amino-acid chain: Probable disease resistance protein At5g63020 (888 aa).

Residues 22–66 (LNRNGDYIHGLEENLTALQRALEQIEQRREDLLRKILSEERRGLQ) adopt a coiled-coil conformation. One can recognise an NB-ARC domain in the interval 139-442 (AERVDAARVE…GEGFIDRNKG (304 aa)). Position 181-188 (181-188 (GMGGVGKT)) interacts with ATP. 5 LRR repeats span residues 512–533 (VARR…PESP), 534–555 (QLIT…FFRL), 558–580 (MLVV…ISEC), 582–604 (SLQY…VELR), and 605–627 (KLLY…SGLT).

It belongs to the disease resistance NB-LRR family.

In terms of biological role, probable disease resistance protein. In Arabidopsis thaliana (Mouse-ear cress), this protein is Probable disease resistance protein At5g63020.